Reading from the N-terminus, the 136-residue chain is Large ribosomal subunit protein uL16c (136 aa).

The interval 1 to 20 (MLSPKRTRFRKQHRGRMKGK) is disordered.

It belongs to the universal ribosomal protein uL16 family. Part of the 50S ribosomal subunit.

The protein localises to the plastid. It is found in the chloroplast. The sequence is that of Large ribosomal subunit protein uL16c from Triticum aestivum (Wheat).